The sequence spans 152 residues: Large ribosomal subunit protein uL15 (152 aa).

The segment at 1–57 (MTSTLNTLKSNSGSRKKKLRKGRGIAAGQGASCGFGMRGQKSRSGRPTRPGFEGGQM) is disordered. Positions 14–23 (SRKKKLRKGR) are enriched in basic residues. Positions 25-37 (IAAGQGASCGFGM) are enriched in gly residues.

The protein belongs to the universal ribosomal protein uL15 family. Part of the 50S ribosomal subunit.

In terms of biological role, binds to the 23S rRNA. In Prochlorococcus marinus (strain AS9601), this protein is Large ribosomal subunit protein uL15.